The chain runs to 97 residues: Osteocalcin (97 aa).

Positions 1-18 (MKTLAFLVLCSLAAICLT) are cleaved as a signal peptide. A propeptide spanning residues 19–52 (SDASTGSQPASDNPADEGMFVERDQASAVVRQKR) is cleaved from the precursor. One can recognise a Gla domain in the interval 53 to 93 (AAGQLSLTQLESLREVCELNLACEHMMDTEGIIAAYTAYYG). The Ca(2+) site is built by Glu63, Glu67, Glu70, and Glu76. 4-carboxyglutamate occurs at positions 63, 67, and 70. Cys69 and Cys75 are disulfide-bonded.

Belongs to the osteocalcin/matrix Gla protein family. In terms of processing, gamma-carboxyglutamate residues are formed by vitamin K dependent carboxylation by GGCX. These residues are essential for the binding of calcium.

The protein resides in the secreted. Its function is as follows. The carboxylated form is one of the main organic components of the bone matrix, which constitutes 1-2% of the total bone protein. The carboxylated form binds strongly to apatite and calcium. The sequence is that of Osteocalcin (bglap) from Sparus aurata (Gilthead sea bream).